The sequence spans 300 residues: Putative hydro-lyase Dshi_3152 (300 aa).

It belongs to the D-glutamate cyclase family.

This is Putative hydro-lyase Dshi_3152 from Dinoroseobacter shibae (strain DSM 16493 / NCIMB 14021 / DFL 12).